Reading from the N-terminus, the 495-residue chain is Protein YhjJ (495 aa).

The N-terminal stretch at Met1–Ala24 is a signal peptide.

It belongs to the peptidase M16 family.

The protein localises to the periplasm. In Salmonella typhi, this protein is Protein YhjJ (yhjJ).